The primary structure comprises 390 residues: Ureide permease 1 (390 aa).

The Extracellular segment spans residues 1–9; that stretch reads MYMIESKGG. A helical membrane pass occupies residues 10 to 30; that stretch reads AIACMLLALLFLGTWPAIMTL. At 31 to 44 the chain is on the cytoplasmic side; it reads TERRGRLPQHTYLD. The chain crosses the membrane as a helical span at residues 45–65; sequence YTLTNLLAAVIIALTLGEIGP. Topologically, residues 66-78 are extracellular; it reads SRPNFFTQLSQDN. The helical transmembrane segment at 79–99 threads the bilayer; it reads WQSVMFAMAGGIVLSLGNLAT. Topologically, residues 100–101 are cytoplasmic; sequence QY. The chain crosses the membrane as a helical span at residues 102 to 122; the sequence is AWAYVGLSVTEVITASITVVI. At 123–136 the chain is on the extracellular side; sequence GTTLNYFLDDRINR. Residues 137–157 form a helical membrane-spanning segment; sequence AEVLFPGVACFLIAVCFGSAV. The Cytoplasmic portion of the chain corresponds to 158 to 221; it reads HKSNAADNKT…RAIKVFGKST (64 aa). An ATP-binding site is contributed by 213 to 220; the sequence is AIKVFGKS. A helical transmembrane segment spans residues 222 to 242; the sequence is IIGLVITFFAGICFSLFSPAF. Residues 243–261 lie on the Extracellular side of the membrane; the sequence is NLATNDQWHTLKHGVPKLN. A helical transmembrane segment spans residues 262–282; that stretch reads VYTAFFYFSISAFVVALILNI. Residues 283 to 307 are Cytoplasmic-facing; it reads RFLYWPILGLPRSSFKAYLNDWNGR. The chain crosses the membrane as a helical span at residues 308-328; it reads GWSFLAGFLCGFGNGLQFMGG. Over 329-333 the chain is Extracellular; the sequence is QAAGY. The chain crosses the membrane as a helical span at residues 334–354; it reads AAADAVQALPLVSTFWGILLF. Topologically, residues 355–363 are cytoplasmic; sequence GEYRRSSRK. A helical membrane pass occupies residues 364 to 384; sequence TYTLLISMLLMFIVAVAVLMA. Residues 385 to 390 lie on the Extracellular side of the membrane; that stretch reads SSGHRK.

This sequence belongs to the plant ureide permease (TC 2.A.7.19) family. Expressed in leaves, flowers, roots and stems.

It localises to the membrane. Proton-coupled transporter that transports a wide spectrum of oxo derivatives of heterocyclic nitrogen compounds, including allantoin, uric acid and xanthine, but not adenine. Mediates high affinity transport of uracil and 5-fluorouracil (a toxic uracil analog). Mediates transport of free pyrimidines and may function during early seedling development in salvage pathways, by the utilization of pyrimidines from seed storage tissue. The sequence is that of Ureide permease 1 from Arabidopsis thaliana (Mouse-ear cress).